The following is a 130-amino-acid chain: Large ribosomal subunit protein bL12 (130 aa).

It belongs to the bacterial ribosomal protein bL12 family. In terms of assembly, homodimer. Part of the ribosomal stalk of the 50S ribosomal subunit. Forms a multimeric L10(L12)X complex, where L10 forms an elongated spine to which 2 to 4 L12 dimers bind in a sequential fashion. Binds GTP-bound translation factors.

In terms of biological role, forms part of the ribosomal stalk which helps the ribosome interact with GTP-bound translation factors. Is thus essential for accurate translation. This Chlamydia muridarum (strain MoPn / Nigg) protein is Large ribosomal subunit protein bL12.